The following is a 474-amino-acid chain: Protein nucleotidyltransferase YdiU (474 aa).

Positions 89, 91, 92, 112, 124, 125, 178, and 185 each coordinate ATP. The active-site Proton acceptor is D262. Residues N263 and D272 each coordinate Mg(2+). An ATP-binding site is contributed by D272.

The protein belongs to the SELO family. The cofactor is Mg(2+). Requires Mn(2+) as cofactor.

The catalysed reaction is L-seryl-[protein] + ATP = 3-O-(5'-adenylyl)-L-seryl-[protein] + diphosphate. The enzyme catalyses L-threonyl-[protein] + ATP = 3-O-(5'-adenylyl)-L-threonyl-[protein] + diphosphate. It carries out the reaction L-tyrosyl-[protein] + ATP = O-(5'-adenylyl)-L-tyrosyl-[protein] + diphosphate. It catalyses the reaction L-histidyl-[protein] + UTP = N(tele)-(5'-uridylyl)-L-histidyl-[protein] + diphosphate. The catalysed reaction is L-seryl-[protein] + UTP = O-(5'-uridylyl)-L-seryl-[protein] + diphosphate. The enzyme catalyses L-tyrosyl-[protein] + UTP = O-(5'-uridylyl)-L-tyrosyl-[protein] + diphosphate. Nucleotidyltransferase involved in the post-translational modification of proteins. It can catalyze the addition of adenosine monophosphate (AMP) or uridine monophosphate (UMP) to a protein, resulting in modifications known as AMPylation and UMPylation. This Trichodesmium erythraeum (strain IMS101) protein is Protein nucleotidyltransferase YdiU.